A 92-amino-acid polypeptide reads, in one-letter code: Large ribosomal subunit protein eL43z (92 aa).

The C4-type zinc finger occupies 39 to 60; sequence CEFCGKFAVKRKAVGIWGCKDC.

The protein belongs to the eukaryotic ribosomal protein eL43 family.

The protein is Large ribosomal subunit protein eL43z of Oryza sativa subsp. japonica (Rice).